The sequence spans 134 residues: Phospholipase A2 (134 aa).

Residues Trp8, Gly10, and Gly12 each coordinate Ca(2+). 5 disulfide bridges follow: Cys9–Cys31, Cys30–Cys70, Cys37–Cys63, Cys61–Cys95, and Cys105–Cys113. Asn13 is a glycosylation site (N-linked (GlcNAc...) asparagine). The active site involves His34. Asp35 serves as a coordination point for Ca(2+). Asp64 is a catalytic residue.

The protein belongs to the phospholipase A2 family. Group III subfamily. Requires Ca(2+) as cofactor. In terms of tissue distribution, expressed by the venom gland.

It is found in the secreted. The enzyme catalyses a 1,2-diacyl-sn-glycero-3-phosphocholine + H2O = a 1-acyl-sn-glycero-3-phosphocholine + a fatty acid + H(+). PLA2 catalyzes the calcium-dependent hydrolysis of the 2-acyl groups in 3-sn-phosphoglycerides. The sequence is that of Phospholipase A2 from Apis dorsata (Giant honeybee).